Consider the following 497-residue polypeptide: Cytochrome P450 71A14 (497 aa).

A helical transmembrane segment spans residues 3–23 (MIIISLCLATILALLLLKQFL). C440 is a binding site for heme.

This sequence belongs to the cytochrome P450 family. It depends on heme as a cofactor.

The protein localises to the membrane. This chain is Cytochrome P450 71A14 (CYP71A14), found in Arabidopsis thaliana (Mouse-ear cress).